A 131-amino-acid polypeptide reads, in one-letter code: Small ribosomal subunit protein uS8 (131 aa).

This sequence belongs to the universal ribosomal protein uS8 family. As to quaternary structure, part of the 30S ribosomal subunit. Contacts proteins S5 and S12.

In terms of biological role, one of the primary rRNA binding proteins, it binds directly to 16S rRNA central domain where it helps coordinate assembly of the platform of the 30S subunit. The sequence is that of Small ribosomal subunit protein uS8 from Chlorobium phaeovibrioides (strain DSM 265 / 1930) (Prosthecochloris vibrioformis (strain DSM 265)).